The sequence spans 195 residues: Imidazoleglycerol-phosphate dehydratase (195 aa).

Belongs to the imidazoleglycerol-phosphate dehydratase family.

The protein resides in the cytoplasm. The catalysed reaction is D-erythro-1-(imidazol-4-yl)glycerol 3-phosphate = 3-(imidazol-4-yl)-2-oxopropyl phosphate + H2O. The protein operates within amino-acid biosynthesis; L-histidine biosynthesis; L-histidine from 5-phospho-alpha-D-ribose 1-diphosphate: step 6/9. The polypeptide is Imidazoleglycerol-phosphate dehydratase (Aminomonas aminovorus).